A 495-amino-acid chain; its full sequence is MKAIMVVGTTSHAGKSFLTTALCRILARRGWHVTPFKGQNMALNSYVTPTGGEMGFAQAVQAWAAGTAPRVEMNPILLKPQGNMTSQVILMGKVAGQTTASDYYEQYFKPGWEAIASALKRLAFEYDLVICEGAGSPAEINLKHRDLTNMRVAQHLGATTLLVVDIDRGGAFAHVVGTLALLDPEERALIKGIIINKFRGQRSLLDSGIKWLEDYTGIPVLGVIPWSEILFPAEDSLDLFERKTKPNGEININVIRLPRISNFTDFDALESEPTVSLNYLDLSQELGYPDAVIIPGSKTTIQDLSALHTSGMAEKLEQYANAGGIVLGICGGFQMLGRRVLDPNQIEGKQEEFAGLNLLPIETTILPDKITTQRQVFSNHPQSGLPVTGYEIHQGITRLADGVKNLENVGCQALFNDEKLGIVTHSQLVWGCYLHGLFDNGAWRRAWLNFLRHRRGLSALPTGIPNYREQREATLNSVADLVEANVNLSPILSQL.

The region spanning 249–443 (EININVIRLP…LHGLFDNGAW (195 aa)) is the GATase cobBQ-type domain. Cysteine 330 (nucleophile) is an active-site residue. Histidine 435 is an active-site residue.

It belongs to the CobB/CobQ family. CobQ subfamily.

Its pathway is cofactor biosynthesis; adenosylcobalamin biosynthesis. Functionally, catalyzes amidations at positions B, D, E, and G on adenosylcobyrinic A,C-diamide. NH(2) groups are provided by glutamine, and one molecule of ATP is hydrogenolyzed for each amidation. The chain is Cobyric acid synthase from Gloeothece citriformis (strain PCC 7424) (Cyanothece sp. (strain PCC 7424)).